The sequence spans 55 residues: Large ribosomal subunit protein bL32c (55 aa).

It belongs to the bacterial ribosomal protein bL32 family.

The protein localises to the plastid. It localises to the chloroplast. The polypeptide is Large ribosomal subunit protein bL32c (Atropa belladonna (Belladonna)).